The chain runs to 78 residues: Conotoxin Cal6.3a (78 aa).

Positions 1-21 are cleaved as a signal peptide; it reads MRFLHFLIVAVLLASFMESGA. A propeptide spanning residues 22–26 is cleaved from the precursor; the sequence is MPRNP. 3 disulfides stabilise this stretch: Cys38–Cys49, Cys41–Cys53, and Cys48–Cys56. Position 76 is a glutamine amide (Gln76).

In terms of tissue distribution, expressed by the venom duct.

Its subcellular location is the secreted. Probable neurotoxin with unknown target. Possibly targets ion channels. The sequence is that of Conotoxin Cal6.3a from Californiconus californicus (California cone).